The chain runs to 147 residues: DNA-directed RNA polymerase I subunit rpa14 (147 aa).

Residues 71–147 (VQGPPTEELI…TQGVGEKEQS (77 aa)) form a disordered region. Residues 74–84 (PPTEELIIPPE) are compositionally biased toward low complexity. Positions 87–111 (LETKEEESLKHAREENDDLHLDKET) are enriched in basic and acidic residues. Positions 112–124 (KKRLKKEKKKAAR) are enriched in basic residues. A compositionally biased stretch (basic and acidic residues) spans 125-135 (REKEEARKAKA).

Component of the RNA polymerase I (Pol I) complex consisting of 14 subunits. Part of a Pol I subcomplex consisting of the subunits A14 and A43. Interacts with rpa43. In terms of processing, phosphorylated.

The protein resides in the nucleus. It localises to the nucleolus. Functionally, DNA-dependent RNA polymerase catalyzes the transcription of DNA into RNA using the four ribonucleoside triphosphates as substrates. Component of RNA polymerase I which synthesizes ribosomal RNA precursors. A14 seems to play a role in the stability of Pol I subunit A43 and association of rrn3 to Pol I. The protein is DNA-directed RNA polymerase I subunit rpa14 (ker1) of Schizosaccharomyces pombe (strain 972 / ATCC 24843) (Fission yeast).